Consider the following 31-residue polypeptide: Toxin BmKK12 (31 aa).

Gln1 carries the pyrrolidone carboxylic acid modification. 3 disulfide bridges follow: Cys4-Cys20, Cys10-Cys25, and Cys14-Cys27. Pro31 is subject to Proline amide.

This sequence belongs to the short scorpion toxin superfamily. Potassium channel inhibitor family. Alpha-KTx 17 subfamily. In terms of processing, the N-terminus is blocked. In terms of tissue distribution, expressed by the venom gland.

Its subcellular location is the secreted. Blocker of potassium channels (Kv). The polypeptide is Toxin BmKK12 (Olivierus martensii (Manchurian scorpion)).